A 275-amino-acid chain; its full sequence is Lectin (275 aa).

A signal peptide spans methionine 1–serine 30. The D-glucose site is built by aspartate 111 and glycine 129. 2 residues coordinate Mn(2+): glutamate 149 and aspartate 151. Residues aspartate 151, phenylalanine 153, asparagine 155, and aspartate 159 each coordinate Ca(2+). Positions 159 and 166 each coordinate Mn(2+). The propeptide occupies asparagine 211 to asparagine 217. D-glucose is bound by residues glycine 246 and alanine 247. A propeptide spanning residues lysine 270–alanine 275 is cleaved from the precursor.

It belongs to the leguminous lectin family. Heterotetramer of two alpha and two beta chains. In terms of processing, the mature form consists of two chains, alpha and beta, produced by cleavage of the immature protein. These remain cleaved, yet fold together to form one subunit.

In terms of biological role, D-mannose specific lectin. In Lens culinaris (Lentil), this protein is Lectin.